The sequence spans 308 residues: ATP synthase gamma chain (308 aa).

It belongs to the ATPase gamma chain family. F-type ATPases have 2 components, CF(1) - the catalytic core - and CF(0) - the membrane proton channel. CF(1) has five subunits: alpha(3), beta(3), gamma(1), delta(1), epsilon(1). CF(0) has three main subunits: a, b and c.

The protein resides in the cell inner membrane. In terms of biological role, produces ATP from ADP in the presence of a proton gradient across the membrane. The gamma chain is believed to be important in regulating ATPase activity and the flow of protons through the CF(0) complex. This chain is ATP synthase gamma chain, found in Salinibacter ruber (strain DSM 13855 / M31).